The primary structure comprises 335 residues: NADH-quinone oxidoreductase subunit H (335 aa).

8 consecutive transmembrane segments (helical) span residues 11–31 (VILTVLRAIVVLLAVVVCGAL), 81–101 (VIFTLAPVVAMSALLIAFVVI), 114–134 (IGLLFFFAMAGLSVYAVLFAG), 154–174 (VSYEVFLGLALMGVVVQVGSF), 187–207 (LWFIIPQFFGFCTFFIAGVAV), 238–258 (FFVGEYIGIILISALLVTLFF), 270–290 (QLSFLWFALKTAFFIMLFILL), and 307–327 (WKFCLPLTLINLLVTAAIVLY).

Belongs to the complex I subunit 1 family. In terms of assembly, NDH-1 is composed of 13 different subunits. Subunits NuoA, H, J, K, L, M, N constitute the membrane sector of the complex.

It is found in the cell inner membrane. It carries out the reaction a quinone + NADH + 5 H(+)(in) = a quinol + NAD(+) + 4 H(+)(out). NDH-1 shuttles electrons from NADH, via FMN and iron-sulfur (Fe-S) centers, to quinones in the respiratory chain. The immediate electron acceptor for the enzyme in this species is believed to be ubiquinone. Couples the redox reaction to proton translocation (for every two electrons transferred, four hydrogen ions are translocated across the cytoplasmic membrane), and thus conserves the redox energy in a proton gradient. This subunit may bind ubiquinone. This is NADH-quinone oxidoreductase subunit H from Pseudomonas putida (strain ATCC 700007 / DSM 6899 / JCM 31910 / BCRC 17059 / LMG 24140 / F1).